Consider the following 90-residue polypeptide: Molybdopterin synthase sulfur carrier subunit (90 aa).

Gly-90 is modified (1-thioglycine; alternate). Position 90 is a glycyl adenylate; alternate (Gly-90).

Belongs to the MoaD family. MOCS2A subfamily. In terms of assembly, heterotetramer; composed of 2 small (Mocs2A) and 2 large (Mocs2B) subunits. In terms of processing, C-terminal thiocarboxylation occurs in 2 steps, it is first acyl-adenylated (-COAMP) via the hesA/moeB/thiF part of MOCS3, then thiocarboxylated (-COSH) via the rhodanese domain of MOCS3.

Its subcellular location is the cytoplasm. The protein operates within cofactor biosynthesis; molybdopterin biosynthesis. Functionally, acts as a sulfur carrier required for molybdopterin biosynthesis. Component of the molybdopterin synthase complex that catalyzes the conversion of precursor Z into molybdopterin by mediating the incorporation of 2 sulfur atoms into precursor Z to generate a dithiolene group. In the complex, serves as sulfur donor by being thiocarboxylated (-COSH) at its C-terminus by MOCS3. After interaction with Mocs2B, the sulfur is then transferred to precursor Z to form molybdopterin. This chain is Molybdopterin synthase sulfur carrier subunit, found in Drosophila erecta (Fruit fly).